The sequence spans 678 residues: Glycine--tRNA ligase beta subunit (678 aa).

This sequence belongs to the class-II aminoacyl-tRNA synthetase family. In terms of assembly, tetramer of two alpha and two beta subunits.

The protein localises to the cytoplasm. It catalyses the reaction tRNA(Gly) + glycine + ATP = glycyl-tRNA(Gly) + AMP + diphosphate. This chain is Glycine--tRNA ligase beta subunit, found in Streptococcus pneumoniae (strain ATCC 700669 / Spain 23F-1).